We begin with the raw amino-acid sequence, 216 residues long: MNMDFTDQRLSYEKGQLDQQSVPISPFELLKAWMHEAIEEQVQEPYAMSLATCGADDKPSVRIVLLREITDKGIVFYTNYESAKGQDIAENPNAEALFFWHKLERQIRISGSIAKIDADKSAAYFQKRPHDSQVGTWVSQPQSGEVASRDVMEQTFEQLQTDYPDGAAVPTPGFWGGYEITVSEIEFWQGRANRMHDRIVYHKEVDGSFSTKRLLP.

Substrate-binding positions include 9-12 (RLSY) and arginine 67. FMN-binding positions include 62-67 (RIVLLR), 77-78 (YT), lysine 84, and glutamine 106. The substrate site is built by tyrosine 124, arginine 128, and serine 132. FMN is bound by residues 142-143 (QS) and tryptophan 188. A substrate-binding site is contributed by 194-196 (RMH). Arginine 198 contributes to the FMN binding site.

Belongs to the pyridoxamine 5'-phosphate oxidase family. Homodimer. Requires FMN as cofactor.

It carries out the reaction pyridoxamine 5'-phosphate + O2 + H2O = pyridoxal 5'-phosphate + H2O2 + NH4(+). It catalyses the reaction pyridoxine 5'-phosphate + O2 = pyridoxal 5'-phosphate + H2O2. Its pathway is cofactor metabolism; pyridoxal 5'-phosphate salvage; pyridoxal 5'-phosphate from pyridoxamine 5'-phosphate: step 1/1. It functions in the pathway cofactor metabolism; pyridoxal 5'-phosphate salvage; pyridoxal 5'-phosphate from pyridoxine 5'-phosphate: step 1/1. Functionally, catalyzes the oxidation of either pyridoxine 5'-phosphate (PNP) or pyridoxamine 5'-phosphate (PMP) into pyridoxal 5'-phosphate (PLP). This is Pyridoxine/pyridoxamine 5'-phosphate oxidase from Psychrobacter arcticus (strain DSM 17307 / VKM B-2377 / 273-4).